Reading from the N-terminus, the 87-residue chain is Prolactin-releasing peptide (87 aa).

Positions 1–22 (MKVLRAWLLCLLMLGLALRGAA) are cleaved as a signal peptide. F53 is subject to Phenylalanine amide. Positions 58–87 (ATLGDVPKPGLRPRLTCFPLEGGAMSSQDG) are excised as a propeptide.

In terms of tissue distribution, medulla oblongata and hypothalamus.

The protein resides in the secreted. Its function is as follows. Stimulates prolactin (PRL) release and regulates the expression of prolactin through its receptor GPR10. May stimulate lactotrophs directly to secrete PRL. This chain is Prolactin-releasing peptide (PRLH), found in Homo sapiens (Human).